We begin with the raw amino-acid sequence, 52 residues long: Light-harvesting protein B-880 alpha chain (52 aa).

Residues 1 to 12 (MWKVWLLFDPRR) lie on the Cytoplasmic side of the membrane. Residues 13-33 (TLVALFTFLFVLALLIHFILL) form a helical membrane-spanning segment. Residue H29 coordinates a bacteriochlorophyll. Over 34–52 (STDRFNWMQGAPTAPAQTS) the chain is Periplasmic.

Belongs to the antenna complex alpha subunit family. The core complex is formed by different alpha and beta chains, binding bacteriochlorophyll molecules, and arranged most probably in tetrameric structures disposed around the reaction center. The non-pigmented gamma chains may constitute additional components.

It localises to the cell inner membrane. In terms of biological role, antenna complexes are light-harvesting systems, which transfer the excitation energy to the reaction centers. The chain is Light-harvesting protein B-880 alpha chain from Afifella marina (Rhodobium marinum).